The following is a 336-amino-acid chain: Ribosomal RNA large subunit methyltransferase F (336 aa).

Positions 1–24 are disordered; it reads MPRPTSPHPDAERKSASPLHPRNR.

The protein belongs to the methyltransferase superfamily. METTL16/RlmF family.

It localises to the cytoplasm. It carries out the reaction adenosine(1618) in 23S rRNA + S-adenosyl-L-methionine = N(6)-methyladenosine(1618) in 23S rRNA + S-adenosyl-L-homocysteine + H(+). Its function is as follows. Specifically methylates the adenine in position 1618 of 23S rRNA. The polypeptide is Ribosomal RNA large subunit methyltransferase F (Pseudomonas aeruginosa (strain LESB58)).